Reading from the N-terminus, the 313-residue chain is Protein TIFY 4A (313 aa).

The disordered stretch occupies residues serine 118–glutamate 149. The region spanning threonine 150 to asparagine 185 is the Tify domain. Disordered stretches follow at residues lysine 220 to lysine 256 and glutamine 281 to isoleucine 313. The short motif at glutamine 232–alanine 254 is the Jas element. A Nuclear localization signal motif is present at residues asparagine 234–arginine 241. Basic residues predominate over residues arginine 243–lysine 256.

It belongs to the TIFY/JAZ family. As to quaternary structure, interacts with AFPH2/NINJA.

The protein resides in the nucleus. Functionally, regulates the arrest of dispersed meristematic cells during lamina development. The protein is Protein TIFY 4A (TIFY4A) of Arabidopsis thaliana (Mouse-ear cress).